Here is a 182-residue protein sequence, read N- to C-terminus: ATP-dependent protease subunit HslV (182 aa).

Residue Thr12 is part of the active site. Positions 167, 170, and 173 each coordinate Na(+).

Belongs to the peptidase T1B family. HslV subfamily. As to quaternary structure, a double ring-shaped homohexamer of HslV is capped on each side by a ring-shaped HslU homohexamer. The assembly of the HslU/HslV complex is dependent on binding of ATP.

It localises to the cytoplasm. The catalysed reaction is ATP-dependent cleavage of peptide bonds with broad specificity.. Its activity is regulated as follows. Allosterically activated by HslU binding. In terms of biological role, protease subunit of a proteasome-like degradation complex believed to be a general protein degrading machinery. This is ATP-dependent protease subunit HslV from Chlorobium phaeobacteroides (strain BS1).